A 374-amino-acid polypeptide reads, in one-letter code: Patatin-2-Kuras 1 (374 aa).

Residues 1–11 (MILATTGSTCA) form the signal peptide. Residues 20-217 (LSIDGGGIKG…TVGDPALLSL (198 aa)) enclose the PNPLA domain. The GXGXXG motif lies at 24-29 (GGGIKG). The short motif at 63-67 (GTSTG) is the GXSXG element. The Nucleophile role is filled by Ser-65. An N-linked (GlcNAc...) asparagine glycan is attached at Asn-103. Asp-203 serves as the catalytic Proton acceptor. Positions 203–205 (DGA) match the DGA/G motif. A coiled-coil region spans residues 309–372 (ENALTGTTTE…DRKKLRANKA (64 aa)).

The protein belongs to the patatin family. Tuber.

It is found in the vacuole. Its function is as follows. Probable lipolytic acyl hydrolase (LAH), an activity which is thought to be involved in the response of tubers to pathogens. The polypeptide is Patatin-2-Kuras 1 (pat2-k1) (Solanum tuberosum (Potato)).